Here is a 591-residue protein sequence, read N- to C-terminus: Aspartate--tRNA ligase (591 aa).

Position 171 (Glu171) interacts with L-aspartate. Positions 195–198 (QLFK) are aspartate. Residue Arg217 participates in L-aspartate binding. ATP contacts are provided by residues 217-219 (RDE) and Gln226. His448 contacts L-aspartate. Position 482 (Glu482) interacts with ATP. Position 489 (Arg489) interacts with L-aspartate. 534–537 (GLDR) is a binding site for ATP.

The protein belongs to the class-II aminoacyl-tRNA synthetase family. Type 1 subfamily. In terms of assembly, homodimer.

It is found in the cytoplasm. It carries out the reaction tRNA(Asp) + L-aspartate + ATP = L-aspartyl-tRNA(Asp) + AMP + diphosphate. Functionally, catalyzes the attachment of L-aspartate to tRNA(Asp) in a two-step reaction: L-aspartate is first activated by ATP to form Asp-AMP and then transferred to the acceptor end of tRNA(Asp). This Aliivibrio salmonicida (strain LFI1238) (Vibrio salmonicida (strain LFI1238)) protein is Aspartate--tRNA ligase.